A 250-amino-acid chain; its full sequence is Tripartite motif-containing protein 74 (250 aa).

The RING-type zinc finger occupies 16 to 57 (CPICLEVFKESLMLQCGHSYCKGCLVSLSYHLDTKVRCPMCW). Residues 84-125 (PEPKVCVHHRNPLSLFCEKDQELICGLCGLLGSHQHHPVTPV) form a B box-type zinc finger. The Zn(2+) site is built by Cys89, His92, Cys111, and His117. Coiled coils occupy residues 125–169 (VSTV…NESD) and 204–235 (LVASLDMQLEQAQGTRERLAQAECVLEQFGNE).

Belongs to the TRIM/RBCC family.

The polypeptide is Tripartite motif-containing protein 74 (TRIM74) (Homo sapiens (Human)).